We begin with the raw amino-acid sequence, 213 residues long: Ras-related protein Rab-25 (213 aa).

The GTP site is built by S21, G24, K25, T26, N27, S38, H39, T43, and T44. Residue T26 coordinates Mg(2+). 2 consecutive short sequence motifs (switch) follow at residues 35–49 and 67–84; these read NEFSHDSRTTIGVEF and DTAGLERYRAITSAYYRG. 2 residues coordinate Mg(2+): T44 and D67. GTP contacts are provided by G70, N125, K126, D128, A156, and L157. Residues C209 and C210 are each lipidated (S-geranylgeranyl cysteine). Cysteine methyl ester is present on C210. Positions 211–213 are cleaved as a propeptide — removed in mature form; it reads INL.

The protein belongs to the small GTPase superfamily. Rab family. Interacts (GTP-bound form) with RAB11FIP1, RAB11FIP2, RAB11FIP3 and RAB11FIP4. Interacts (via the hypervariable C-terminal region) with ITGB1 (via the cytoplasmic region); the interaction is GTP-dependent. Interacts with ITGAV. Associates with the integrin alpha-V/beta-1 heterodimer. Interacts with VPS33B. It depends on Mg(2+) as a cofactor. As to expression, expression is restricted to epithelial cells. Expressed in the gastrointestinal mucosa, (highest expression seen in the ileum and colon), kidney, and lung. A very minor and variable level of expression is seen in the splenic tissue.

It localises to the cell membrane. The protein resides in the cell projection. The protein localises to the pseudopodium membrane. Its subcellular location is the cytoplasmic vesicle. It carries out the reaction GTP + H2O = GDP + phosphate + H(+). With respect to regulation, regulated by guanine nucleotide exchange factors (GEFs) which promote the exchange of bound GDP for free GTP. Regulated by GTPase activating proteins (GAPs) which increase the GTP hydrolysis activity. Inhibited by GDP dissociation inhibitors (GDIs) which prevent Rab-GDP dissociation. Functionally, the small GTPases Rab are key regulators of intracellular membrane trafficking, from the formation of transport vesicles to their fusion with membranes. Rabs cycle between an inactive GDP-bound form and an active GTP-bound form that is able to recruit to membranes different set of downstream effectors directly responsible for vesicle formation, movement, tethering and fusion. RAB25 regulates epithelial cell differentiation, proliferation and survival, thereby playing key roles in tumorigenesis. Promotes invasive migration of cells in which it functions to localize and maintain integrin alpha-V/beta-1 at the tips of extending pseudopodia. Involved in the regulation of epithelial morphogenesis through the control of CLDN4 expression and localization at tight junctions. May selectively regulate the apical recycling pathway. Together with MYO5B regulates transcytosis. The polypeptide is Ras-related protein Rab-25 (RAB25) (Oryctolagus cuniculus (Rabbit)).